A 313-amino-acid polypeptide reads, in one-letter code: Ribosomal RNA small subunit methyltransferase H (313 aa).

Residues 35–37, aspartate 55, phenylalanine 80, aspartate 102, and glutamine 109 contribute to the S-adenosyl-L-methionine site; that span reads GGH.

Belongs to the methyltransferase superfamily. RsmH family.

The protein resides in the cytoplasm. The enzyme catalyses cytidine(1402) in 16S rRNA + S-adenosyl-L-methionine = N(4)-methylcytidine(1402) in 16S rRNA + S-adenosyl-L-homocysteine + H(+). Specifically methylates the N4 position of cytidine in position 1402 (C1402) of 16S rRNA. The polypeptide is Ribosomal RNA small subunit methyltransferase H (Shewanella amazonensis (strain ATCC BAA-1098 / SB2B)).